A 349-amino-acid polypeptide reads, in one-letter code: RING-H2 finger protein ATL48 (349 aa).

In terms of domain architecture, HIG1 spans 1–85 (MSSVEPDMED…DNPWKKLLLS (85 aa)). Ser-2 carries the post-translational modification N-acetylserine. The next 3 helical transmembrane spans lie at 21–41 (PLVP…LISF), 55–75 (ARVV…YYYG), and 121–141 (CLVI…YLIF). An RING-type; atypical zinc finger spans residues 207-249 (CAVCLNEFSDTDKLRLLPVCSHAFHLHCIDTWLLSNSTCPLCR).

The protein belongs to the RING-type zinc finger family. ATL subfamily.

The protein resides in the membrane. It carries out the reaction S-ubiquitinyl-[E2 ubiquitin-conjugating enzyme]-L-cysteine + [acceptor protein]-L-lysine = [E2 ubiquitin-conjugating enzyme]-L-cysteine + N(6)-ubiquitinyl-[acceptor protein]-L-lysine.. It functions in the pathway protein modification; protein ubiquitination. The sequence is that of RING-H2 finger protein ATL48 (ATL48) from Arabidopsis thaliana (Mouse-ear cress).